Here is a 424-residue protein sequence, read N- to C-terminus: 26S proteasome regulatory subunit 4 homolog (424 aa).

Positions 1–11 (MSRDKSERDNL) are enriched in basic and acidic residues. The disordered stretch occupies residues 1–33 (MSRDKSERDNLQDTTTINLRRRRRVKEGKAASK). An ATP-binding site is contributed by 210 to 217 (GLPGTGKT).

It belongs to the AAA ATPase family. The 26S proteasome consists of a 20S proteasome core and two 19S regulatory subunits. The 20S proteasome core is composed of 28 subunits that are arranged in four stacked rings, resulting in a barrel-shaped structure. The two end rings are each formed by seven alpha subunits, and the two central rings are each formed by seven beta subunits. The catalytic chamber with the active sites is on the inside of the barrel.

The protein localises to the cytoplasm. It localises to the nucleus. Its function is as follows. Acts as a regulatory subunit of the 26S proteasome which degrades poly-ubiquitinated proteins in the cytoplasm and in the nucleus. It is essential for the regulated turnover of proteins and for the removal of misfolded proteins. The proteasome is a multicatalytic proteinase complex that is characterized by its ability to cleave peptides with Arg, Phe, Tyr, Leu, and Glu adjacent to the leaving group at neutral or slightly basic pH. This Encephalitozoon cuniculi (strain GB-M1) (Microsporidian parasite) protein is 26S proteasome regulatory subunit 4 homolog (RPT2).